The sequence spans 105 residues: Thioredoxin (105 aa).

A Thioredoxin domain is found at 1 to 105 (MASNVTDKSF…SLIEWINNNI (105 aa)). Residues Cys-30 and Cys-33 are joined by a disulfide bond.

This sequence belongs to the thioredoxin family.

Functionally, component of the thioredoxin-thioredoxin reductase system. Participates in various redox reactions through the reversible oxidation of its active center dithiol to a disulfide and catalyzes dithiol-disulfide exchange reactions. This is Thioredoxin (trxA) from Rickettsia bellii (strain RML369-C).